The sequence spans 536 residues: MMLQTSTILQLLLFLVGSVSAYNILVFSPATSKSHLISNGRIADELARAGHNVTLLEIDFLGIVDTTKSAKLVKKTIVRTPKGMQGFRNVLQGFSEIVMEDPGLWGLVEGNIMYQNAYNALCEEFLEMDDIFQELKAQNFDGFFAEQLNICGFGYAKALGIERRFLISSCPYFSHVYDYTSHPAPYASVPFVADMSPEPTYFERAQNLLNGFTCNMLFRYMHTRLSFIFRNKFGQDFPSVPEIVRNADIIFLATDEIIDFSAPTLPNLVNIGGLGVDDDTTEMEPVFEAEMKKGEKGVILFSLGTIANTSTIDKKVMESFLGIVKKFPDYHFLIRADKYDKNTKERAKGISNVFVSDWLPQPAILHHPRLRTFITHAGYNGLVEAARAGVPLITIPFMFDQNLNSRAIEKKGWGIRSDKKKLLNDPDSFEADLKEMLTNPSYTKNAHRIRDLIKSKPLGARDRFIKTTEWVIQNGGVRELLTEGRDLSIISSYNLDIIVPVLFVLLYCLIIPFFKLIGGFYYYSCFGHIESKHKLD.

An N-terminal signal peptide occupies residues 1 to 21 (MMLQTSTILQLLLFLVGSVSA). N-linked (GlcNAc...) asparagine glycosylation is found at asparagine 52 and asparagine 308. A helical membrane pass occupies residues 497–517 (IIVPVLFVLLYCLIIPFFKLI).

Belongs to the UDP-glycosyltransferase family.

It localises to the membrane. It carries out the reaction glucuronate acceptor + UDP-alpha-D-glucuronate = acceptor beta-D-glucuronoside + UDP + H(+). The polypeptide is Putative UDP-glucuronosyltransferase ugt-47 (ugt-47) (Caenorhabditis briggsae).